The sequence spans 228 residues: Lipoprotein-releasing system ATP-binding protein LolD (228 aa).

An ABC transporter domain is found at 6–227; it reads LELLGIDRTY…LKDGKLIDYV (222 aa). Residue 42-49 participates in ATP binding; it reads GPSGSGKS.

The protein belongs to the ABC transporter superfamily. Lipoprotein translocase (TC 3.A.1.125) family. The complex is composed of two ATP-binding proteins (LolD) and two transmembrane proteins (LolC and LolE).

Its subcellular location is the cell inner membrane. In terms of biological role, part of the ABC transporter complex LolCDE involved in the translocation of mature outer membrane-directed lipoproteins, from the inner membrane to the periplasmic chaperone, LolA. Responsible for the formation of the LolA-lipoprotein complex in an ATP-dependent manner. The chain is Lipoprotein-releasing system ATP-binding protein LolD from Hyphomonas neptunium (strain ATCC 15444).